The following is an 87-amino-acid chain: Small ribosomal subunit protein uS15c (87 aa).

It belongs to the universal ribosomal protein uS15 family. Part of the 30S ribosomal subunit.

The protein resides in the plastid. It localises to the chloroplast. This Solanum lycopersicum (Tomato) protein is Small ribosomal subunit protein uS15c (rps15).